The following is a 502-amino-acid chain: Probable mitochondrial-processing peptidase subunit alpha (502 aa).

Belongs to the peptidase M16 family. Heterodimer of mas2 (alpha) and mas1 (beta) subunits, forming the mitochondrial processing protease (MPP) in which mas2 is involved in substrate recognition and binding and mas1 is the catalytic subunit.

The protein resides in the mitochondrion matrix. Functionally, substrate recognition and binding subunit of the essential mitochondrial processing protease (MPP), which cleaves the mitochondrial sequence off newly imported precursors proteins. This Schizosaccharomyces pombe (strain 972 / ATCC 24843) (Fission yeast) protein is Probable mitochondrial-processing peptidase subunit alpha (mas2).